The following is a 74-amino-acid chain: Serine rich endogenous peptide 23 (74 aa).

The N-terminal stretch at 1–25 (MNKVVVYVLALSILLFFGLPNTTLA) is a signal peptide. Residues 52–66 (KIAVGGSDSVRAHSK) carry the SCOOP motif motif. Residues 58-60 (SDS) carry the SxS motif essential for MIK2 binding motif.

Belongs to the serine rich endogenous peptide (SCOOP) phytocytokine family. As to quaternary structure, interacts with MIK2 (via extracellular leucine-rich repeat domain); this interaction triggers the formation of complex between MIK2 and the BAK1/SERK3 and SERK4 coreceptors, and subsequent BAK1 activation by phosphorylation. In terms of tissue distribution, mostly expressed in roots, and, to a lower extent, in seedlings shoots.

The protein localises to the cell membrane. It is found in the secreted. Its subcellular location is the extracellular space. The protein resides in the apoplast. Its function is as follows. Brassicaceae-specific phytocytokine (plant endogenous peptide released into the apoplast) perceived by MIK2 in a BAK1/SERK3 and SERK4 coreceptors-dependent manner, that modulates various physiological and antimicrobial processes including growth prevention and reactive oxygen species (ROS) response regulation. Inhibits root growth. The chain is Serine rich endogenous peptide 23 from Arabidopsis thaliana (Mouse-ear cress).